We begin with the raw amino-acid sequence, 153 residues long: Small ribosomal subunit protein uS19 (153 aa).

The protein belongs to the universal ribosomal protein uS19 family.

The sequence is that of Small ribosomal subunit protein uS19 (RPS15) from Elaeis oleifera (American oil palm).